We begin with the raw amino-acid sequence, 264 residues long: ATP synthase subunit b 1 (264 aa).

The helical transmembrane segment at 2 to 22 (LFDWFTFWAQLLNFLILVWLL) threads the bilayer. Residues 240–264 (ASSALLDGPDDEMNEEEGHAGKDAD) form a disordered region. Residues 255 to 264 (EEGHAGKDAD) are compositionally biased toward basic and acidic residues.

It belongs to the ATPase B chain family. In terms of assembly, F-type ATPases have 2 components, F(1) - the catalytic core - and F(0) - the membrane proton channel. F(1) has five subunits: alpha(3), beta(3), gamma(1), delta(1), epsilon(1). F(0) has four main subunits: a(1), b(2) and c(10-14). The alpha and beta chains form an alternating ring which encloses part of the gamma chain. F(1) is attached to F(0) by a central stalk formed by the gamma and epsilon chains, while a peripheral stalk is formed by the delta and b chains.

It is found in the cell inner membrane. Functionally, f(1)F(0) ATP synthase produces ATP from ADP in the presence of a proton or sodium gradient. F-type ATPases consist of two structural domains, F(1) containing the extramembraneous catalytic core and F(0) containing the membrane proton channel, linked together by a central stalk and a peripheral stalk. During catalysis, ATP synthesis in the catalytic domain of F(1) is coupled via a rotary mechanism of the central stalk subunits to proton translocation. Component of the F(0) channel, it forms part of the peripheral stalk, linking F(1) to F(0). The polypeptide is ATP synthase subunit b 1 (Chlorobium luteolum (strain DSM 273 / BCRC 81028 / 2530) (Pelodictyon luteolum)).